Reading from the N-terminus, the 341-residue chain is Ketol-acid reductoisomerase (NADP(+)) (341 aa).

Residues 1-181 (MARVYREGDI…GCARAGVLET (181 aa)) enclose the KARI N-terminal Rossmann domain. Residues 24-27 (FGSQ), S50, S52, and 82-85 (DERQ) each bind NADP(+). Residue H107 is part of the active site. Position 133 (G133) interacts with NADP(+). The region spanning 182–327 (TFAEETETDL…AELRALAAEG (146 aa)) is the KARI C-terminal knotted domain. Residues D190, E194, E226, and E230 each coordinate Mg(2+). Residue S251 coordinates substrate.

Belongs to the ketol-acid reductoisomerase family. Mg(2+) is required as a cofactor.

The catalysed reaction is (2R)-2,3-dihydroxy-3-methylbutanoate + NADP(+) = (2S)-2-acetolactate + NADPH + H(+). It catalyses the reaction (2R,3R)-2,3-dihydroxy-3-methylpentanoate + NADP(+) = (S)-2-ethyl-2-hydroxy-3-oxobutanoate + NADPH + H(+). It functions in the pathway amino-acid biosynthesis; L-isoleucine biosynthesis; L-isoleucine from 2-oxobutanoate: step 2/4. Its pathway is amino-acid biosynthesis; L-valine biosynthesis; L-valine from pyruvate: step 2/4. Functionally, involved in the biosynthesis of branched-chain amino acids (BCAA). Catalyzes an alkyl-migration followed by a ketol-acid reduction of (S)-2-acetolactate (S2AL) to yield (R)-2,3-dihydroxy-isovalerate. In the isomerase reaction, S2AL is rearranged via a Mg-dependent methyl migration to produce 3-hydroxy-3-methyl-2-ketobutyrate (HMKB). In the reductase reaction, this 2-ketoacid undergoes a metal-dependent reduction by NADPH to yield (R)-2,3-dihydroxy-isovalerate. This is Ketol-acid reductoisomerase (NADP(+)) from Rubrobacter xylanophilus (strain DSM 9941 / JCM 11954 / NBRC 16129 / PRD-1).